Here is a 43-residue protein sequence, read N- to C-terminus: Hainantoxin F5-22.36 (43 aa).

3 disulfides stabilise this stretch: Cys1–Cys19, Cys8–Cys24, and Cys18–Cys38.

The protein belongs to the neurotoxin 14 (magi-1) family. 02 (HWTX-XVIc) subfamily. Expressed by the venom gland.

The protein localises to the secreted. Functionally, probable ion channel inhibitor. The sequence is that of Hainantoxin F5-22.36 from Cyriopagopus hainanus (Chinese bird spider).